A 500-amino-acid polypeptide reads, in one-letter code: Organic cation/carnitine transporter 7 (500 aa).

Residues 1–23 are Cytoplasmic-facing; that stretch reads MADGNTRFTVDEALVAMGFGKFQ. Residues 24 to 44 form a helical membrane-spanning segment; it reads IYVLAYAGMGWVAEAMEMMLL. Topologically, residues 45–62 are extracellular; that stretch reads SFVGPAVQSLWNLSARQE. Asparagine 56 carries N-linked (GlcNAc...) asparagine glycosylation. A helical membrane pass occupies residues 63–83; the sequence is SLITSVVFAGMLIGAYSWGIV. The Cytoplasmic segment spans residues 84–97; the sequence is SDKHGRRKGFIITA. A helical membrane pass occupies residues 98–118; sequence VVTFVAGFLSAFSPNYMWLII. Residues 119-120 lie on the Extracellular side of the membrane; the sequence is LR. A helical transmembrane segment spans residues 121–141; sequence CLVGLGLGGGPVLASWYLEFI. Residue 137–144 coordinates ATP; it reads YLEFIPAP. At 142–150 the chain is on the cytoplasmic side; it reads PAPSRGTWM. A helical transmembrane segment spans residues 151 to 171; it reads VVFSAFWTVGTIFEASLAWLV. The Extracellular portion of the chain corresponds to 172–174; the sequence is MPR. A helical membrane pass occupies residues 175–195; that stretch reads LGWRWLLAFSSVPSSLLLLFY. Topologically, residues 196 to 293 are cytoplasmic; sequence RWTSESPRYL…ALLSPTLMKR (98 aa). Residues 294 to 314 form a helical membrane-spanning segment; that stretch reads TLLLWVVFFGNAFAYYGVVLL. At 315–341 the chain is on the extracellular side; sequence TTELNNSHNRCYPTEKQLRNSNDVNYR. N-linked (GlcNAc...) asparagine glycosylation occurs at asparagine 319. The helical transmembrane segment at 342–362 threads the bilayer; sequence DVFIASFAEFPGLLISAAMVD. At 363–367 the chain is on the cytoplasmic side; that stretch reads RLGRK. A helical membrane pass occupies residues 368–387; the sequence is ASMASMLFTCCIFLLPLLSH. Residues 388-401 are Extracellular-facing; that stretch reads QSPFITTVLLFGGR. Residues 402-422 traverse the membrane as a helical segment; the sequence is ICISAAFTVVYIYAPEIYPTA. Over 423 to 429 the chain is Cytoplasmic; the sequence is VRTTGVG. A helical membrane pass occupies residues 430-450; sequence VGSSVGRIGGILCPLVAVGLV. Over 451-456 the chain is Extracellular; that stretch reads HGCHQT. A helical transmembrane segment spans residues 457–477; sequence IAVLLFEVVILVSGICVCLFP. Over 478 to 500 the chain is Cytoplasmic; that stretch reads FETSGRDLTDSISASKEPPSASV.

The protein belongs to the major facilitator (TC 2.A.1) superfamily. Organic cation transporter (TC 2.A.1.19) family. Expressed in pollen.

Its subcellular location is the membrane. Functionally, high affinity carnitine transporter involved in the active cellular uptake of carnitine. Also transports organic cations. The chain is Organic cation/carnitine transporter 7 (OCT7) from Arabidopsis thaliana (Mouse-ear cress).